We begin with the raw amino-acid sequence, 143 residues long: P840 reaction center 17 kDa protein (143 aa).

Positions 1 to 23 (MQPQLSRPQTATNQVRNSVSGPW) are enriched in polar residues. The interval 1–25 (MQPQLSRPQTATNQVRNSVSGPWSG) is disordered.

Component of the P840 reaction center.

The chain is P840 reaction center 17 kDa protein (pscD) from Chlorobaculum thiosulfatiphilum (Chlorobium limicola f.sp. thiosulfatophilum).